We begin with the raw amino-acid sequence, 837 residues long: Tuftelin-interacting protein 11 (837 aa).

2 stretches are compositionally biased toward basic and acidic residues: residues 1-13 (MSLSHLYRDGEGR) and 53-64 (VWAERDSDDERP). Disordered regions lie at residues 1-21 (MSLSHLYRDGEGRIDDDDDER), 53-72 (VWAERDSDDERPSFGGKRAR), and 85-133 (LKKG…KGFA). Residues 1–50 (MSLSHLYRDGEGRIDDDDDERENFEITDWDLQNEFNPNRQRHWQTKEEAT) form a required for interaction with DHX15 region. Phosphoserine occurs at positions 2, 59, and 98. Acidic residues predominate over residues 91 to 102 (EEAELEDSDDEE). Over residues 103 to 116 (KPVKQDDFPKDFGP) the composition is skewed to basic and acidic residues. Position 144 is a phosphoserine (Ser-144). A G-patch domain is found at 149-195 (TKGIGQKLLQKMGYVPGRGLGKNAQGIINPIEAKQRKGKGAVGAYGS). Positions 179-236 (IEAKQRKGKGAVGAYGSERTTQSMQDFPVVDSEEEAEEEFQKELSQWRKDPSGSKKKP) are disordered. Residue Ser-210 is modified to Phosphoserine. A compositionally biased stretch (basic and acidic residues) spans 217-231 (EFQKELSQWRKDPSG). Positions 700 to 705 (VKDKFN) match the Nuclear localization signal motif. The interval 710–734 (IMNRAVSSNVGAYMQPGARENIAYL) is required for nuclear speckle localization.

The protein belongs to the TFP11/STIP family. Identified in the spliceosome C complex. Found in the Intron Large (IL) complex, a post-mRNA release spliceosomal complex containing the excised intron, U2, U5 and U6 snRNPs, and splicing factors. Interacts with TUFT1. Interacts with DHX15; indicative for a recruitment of DHX15 to the IL complex. Interacts with GCFC2.

The protein localises to the cytoplasm. It localises to the nucleus. Involved in pre-mRNA splicing, specifically in spliceosome disassembly during late-stage splicing events. Intron turnover seems to proceed through reactions in two lariat-intron associated complexes termed Intron Large (IL) and Intron Small (IS). In cooperation with DHX15 seems to mediate the transition of the U2, U5 and U6 snRNP-containing IL complex to the snRNP-free IS complex leading to efficient debranching and turnover of excised introns. May play a role in the differentiation of ameloblasts and odontoblasts or in the forming of the enamel extracellular matrix. The protein is Tuftelin-interacting protein 11 (TFIP11) of Homo sapiens (Human).